Here is a 165-residue protein sequence, read N- to C-terminus: Lipoprotein signal peptidase (165 aa).

Transmembrane regions (helical) follow at residues 9 to 29 (FLAI…VLLY), 69 to 89 (KYFL…FLFL), and 98 to 118 (IRFS…DILF). Residues D124 and D142 contribute to the active site. A helical membrane pass occupies residues 133–153 (WYFPTFNFADIFISLGTFIFV).

This sequence belongs to the peptidase A8 family.

Its subcellular location is the cell inner membrane. It catalyses the reaction Release of signal peptides from bacterial membrane prolipoproteins. Hydrolyzes -Xaa-Yaa-Zaa-|-(S,diacylglyceryl)Cys-, in which Xaa is hydrophobic (preferably Leu), and Yaa (Ala or Ser) and Zaa (Gly or Ala) have small, neutral side chains.. The protein operates within protein modification; lipoprotein biosynthesis (signal peptide cleavage). This protein specifically catalyzes the removal of signal peptides from prolipoproteins. This is Lipoprotein signal peptidase from Chlamydia caviae (strain ATCC VR-813 / DSM 19441 / 03DC25 / GPIC) (Chlamydophila caviae).